Consider the following 87-residue polypeptide: UPF0250 protein YE3006 (87 aa).

The protein belongs to the UPF0250 family.

This Yersinia enterocolitica serotype O:8 / biotype 1B (strain NCTC 13174 / 8081) protein is UPF0250 protein YE3006.